We begin with the raw amino-acid sequence, 1047 residues long: FACT complex subunit SPT16 (1047 aa).

At Ala-2 the chain carries N-acetylalanine. Residue Lys-139 is modified to N6-acetyllysine. Ser-188 is modified (phosphoserine). N6-acetyllysine occurs at positions 196 and 223. A Phosphoserine modification is found at Ser-455. Residues 465-507 (RNEMTAEEKRRAHQKELAAQLNEEAKRRLTEQKGEQQIQKARK) are a coiled coil. Positions 491 to 518 (RRLTEQKGEQQIQKARKSNVSYKNPSLM) are disordered. Lys-497 participates in a covalent cross-link: Glycyl lysine isopeptide (Lys-Gly) (interchain with G-Cter in SUMO2). Residues 499–514 (EQQIQKARKSNVSYKN) show a composition bias toward polar residues. Ser-508 is subject to Phosphoserine. Lys-513 carries the N6-acetyllysine; alternate modification. Lys-513 is covalently cross-linked (Glycyl lysine isopeptide (Lys-Gly) (interchain with G-Cter in SUMO2); alternate). Residue Lys-647 forms a Glycyl lysine isopeptide (Lys-Gly) (interchain with G-Cter in SUMO2) linkage. Residues Ser-650 and Ser-658 each carry the phosphoserine modification. An N6-acetyllysine mark is found at Lys-732 and Lys-786. At Thr-903 the chain carries Phosphothreonine. At Lys-904 the chain carries N6-acetyllysine. Positions 918–1047 (EQGGWSFLEP…SSAPPKKKRK (130 aa)) are disordered. The span at 927–973 (PEGEGSDAEDGDSESEIEDETFNPSEDDYEEEEEDSDEDYSSEAEES) shows a compositional bias: acidic residues. 4 positions are modified to phosphoserine: Ser-979, Ser-982, Ser-986, and Ser-1015. Over residues 985-1005 (ESGKDWDELEEEARKADRESR) the composition is skewed to basic and acidic residues. Positions 1024–1039 (VHSSGRGSNRGSRHSS) are enriched in low complexity.

The protein belongs to the peptidase M24 family. SPT16 subfamily. As to quaternary structure, interacts with MYOG (via C-terminal region). Component of the FACT complex, a stable heterodimer of SSRP1 and SUPT16H. Also a component of a CK2-SPT16-SSRP1 complex which forms following UV irradiation, composed of SSRP1, SUPT16H, CSNK2A1, CSNK2A2 and CSNK2B. Interacts with NEK9. Binds to histone H2A-H2B. Identified in a centromere complex containing histones H2A, H2B and H4, and at least CENPA, CENPB, CENPC, CENPT, CENPN, HJURP, SUPT16H, SSRP1 and RSF1. Interacts with GTF2E2. Post-translationally, ADP-ribosylated. ADP-ribosylation by PARP1 is induced by genotoxic stress and correlates with dissociation of FACT from chromatin. As to expression, widely expressed. Expressed in brain, liver, heart, kidneys, lungs, spleen, thymus, ovary, and testes, with highest levels of expression observed in thymus.

It is found in the nucleus. The protein localises to the chromosome. Its function is as follows. Component of the FACT complex, a general chromatin factor that acts to reorganize nucleosomes. The FACT complex is involved in multiple processes that require DNA as a template such as mRNA elongation, DNA replication and DNA repair. During transcription elongation the FACT complex acts as a histone chaperone that both destabilizes and restores nucleosomal structure. It facilitates the passage of RNA polymerase II and transcription by promoting the dissociation of one histone H2A-H2B dimer from the nucleosome, then subsequently promotes the reestablishment of the nucleosome following the passage of RNA polymerase II. The FACT complex is probably also involved in phosphorylation of 'Ser-392' of p53/TP53 via its association with CK2 (casein kinase II). The sequence is that of FACT complex subunit SPT16 (Supt16h) from Mus musculus (Mouse).